Consider the following 802-residue polypeptide: Oligophrenin-1 (802 aa).

The PH domain maps to 265–368 (QPTIEGYLYT…WMEAMDGKEP (104 aa)). Residues 380–564 (MELNEVGFKF…ILIEHFGKIY (185 aa)) enclose the Rho-GAP domain. 2 disordered regions span residues 641-663 (QKSG…CQTE) and 682-802 (TKAI…GDES). The segment covering 716–732 (HHKEGDTDCFSKVRPPG) has biased composition (basic and acidic residues). The span at 751 to 768 (SSTSQKPESKPETVSSNA) shows a compositional bias: polar residues.

In terms of assembly, interacts with HOMER1. Interacts with AMPA receptor complexes. Interacts with SH3GL2 (endophilin-A1). Interacts (via C-terminus) with NR1D1. In terms of tissue distribution, high expression in brain, particularly in the cerebellum, hippocampus, thalamus, frontal lobes, sensory cortex. Found in the myelin sheaths of peripheral nerves, chromaffin cells within the adrenal medulla, and in extra-adrenal chromaffin cells associated with celiac ganglia.

Its subcellular location is the postsynapse. It localises to the presynapse. The protein resides in the cell projection. It is found in the axon. The protein localises to the dendritic spine. Its subcellular location is the dendrite. It localises to the cytoplasm. Stimulates GTP hydrolysis of members of the Rho family. Its action on RHOA activity and signaling is implicated in growth and stabilization of dendritic spines, and therefore in synaptic function, in hippocampal neurons. Critical for the stabilization of AMPA receptors at postsynaptic sites. Critical for the regulation of synaptic vesicle endocytosis at pre-synaptic terminals. Required for the localization of NR1D1 to dendrites, can suppress its repressor activity and protect it from proteasomal degradation. This is Oligophrenin-1 (Ophn1) from Rattus norvegicus (Rat).